Consider the following 81-residue polypeptide: Small ribosomal subunit protein bS16 (81 aa).

Belongs to the bacterial ribosomal protein bS16 family.

In Caldicellulosiruptor bescii (strain ATCC BAA-1888 / DSM 6725 / KCTC 15123 / Z-1320) (Anaerocellum thermophilum), this protein is Small ribosomal subunit protein bS16.